The chain runs to 242 residues: Venom nerve growth factor 1 (242 aa).

Positions 1–18 are cleaved as a signal peptide; the sequence is MSMLCYTLIIAFLIGIWA. The propeptide occupies 19-125; it reads APQSEDNVPL…ALNRNIQAKR (107 aa). Cystine bridges form between Cys139–Cys203, Cys181–Cys231, and Cys191–Cys233.

Belongs to the NGF-beta family. As to quaternary structure, homodimer; non-covalently linked. Expressed by the venom gland.

Its subcellular location is the secreted. Nerve growth factor is important for the development and maintenance of the sympathetic and sensory nervous systems. It stimulates division and differentiation of sympathetic and embryonic sensory neurons as well as basal forebrain cholinergic neurons in the brain. Its relevance in the snake venom is not clear. However, it has been shown to inhibit metalloproteinase-dependent proteolysis of platelet glycoprotein Ib alpha, suggesting a metalloproteinase inhibition to prevent metalloprotease autodigestion and/or protection against prey proteases. Binds a lipid between the two protein chains in the homodimer. The lipid-bound form promotes histamine relase from mouse mast cells, contrary to the lipid-free form. The chain is Venom nerve growth factor 1 from Pseudechis australis (Mulga snake).